We begin with the raw amino-acid sequence, 4699 residues long: MSDNDDEWNGFSDDNGEDDGPPEPGRPSQIDGQPWDVPDSALLQGDVIPNPKDSDFATDFAKIEELQGAINAWARSRGFAVVRRHGRNKQDGLYTRFDILCDRFGSPRAPRGAGVRETATRKCDCKWKAAASRTKDGWRFHSHPDPQHSVHNHGPSLHPSAHTQHRMSNSESLDTIAELSNHASIRAREIRSVVNQEHDTIYTRKDIYNVRAKMRKVNLDGYTAAGALIKALDNVDGDTANHYEVEWADAAETIFCSLVWGFESCLEATSIYHDCMLIDLTYNTNYMGMPLYQVNCLTSVGKTLSTMFGLVSDETTQTFRWLMKATKKLRDKFNIPEPAVIVTDHCKELKQAISEVFPDSQQQTCIFHVIKNVMLNTKRKFKYPGRDEVDSEDEEYRADFEDYDGVSPQERAAMEKDHAERLLSRNTSTSKVTKPISHDPRGVEEMFKAMQWMSCRDQWAHCYTRHYRNFGVRTTSPTESNNMSIKSYLINGRSSAYSLVSVSQDLCKEQVQQNVEEMAKQAIRARHDFLSRPWLGALPLRVSYKALDLIVGEYRRAKAAMPSTRPSQSIRRPLEPCHPDTCTATIQYSIPCRHDIYKKLAEGERLELREVHTHWHLQMSLVKPPLPSVEDNVADPKIVENRKGRPKNSARPLPDGLGIPSSPKTPRSQRRDGTQGSQGSQGRRTPGSTPGPPRGNAPRLQPSIRRVLSAHETVEEPRPPQAAPKRRGRPPGSKNKKKDQAPAPAESQLSAAERAEPRTTLVIASAPRRGLRAAPAAETTASEKRKAQAGGDSAPAPKRTRATASTPRAQSDQGTGNVAIPSLPAPAGAPGARVTRSGRAVRLTAKAAKAASGGRISYFFDWHGPSITIDTACSSSLIAVHQAVQSLRNGEVPLAIAAGANLLLGPSQYVAESKLKMLSPGGLSRMWDEEADGYARGDGFASVVLKPLKDAIRDGDRIECIIRETGSNQDGRTQGITMPSPIAQSALIRETYQRAGLDLSRPADRPQYFEAHGTGTPAGDPVESEAISTAFFGPDSRFKRQPGDAKLLVGSIKTVLGHTEGTAGLASLIKVSLALQNGKVPPNLHFNRLSPSVKPHYQNLQIPTSLLDWPEVPEGGVRRASVNSFGFGGANAHAILEAYTPATAKELLTAPSPFSFAPLLFSAASDTALAANIAAHADFVEKASDVNLGDIAHTLHSHRSALAKRAVFAAASRSDLVARLRGHAAEDKAKSDAAAPLGRSLSSRPRTLGVFTGQGAQWPRMGAELIERSEAVSRIVDELEASLATLPQQDRPSWSLRAEMLAPAASSQIGKAEFSQPLCTALQIILVDVLREAGVVFDAVVGHSSGEIAAAYAAGVVTASEAMRIAYYRGFHTHRCGGAGGQSGAMMAVGTSFEDAQELCALDAFKGRLSVAASNSSSSITLSGDADAVAEAAVVCEEENKFHRALRVDKAYHSHHMVPCLGPYVESLRGACNISPTPQNGSGSGCVWISSVYATDIADVQDDIGSEYWAKNMGQTVLFSQALETALRERGPFDQVVELGAHPALKGPAMQVIEETTREKIPYVGTLLRQRDATEALAESLGALWAANGRASVDLAKYEAFLSGGRVHQVLADELPRYQWDHQTAYYHDSRLLKALRTSSIKPNELLGTRIMDNSPSEARWRNRLSANEVPWLRDHRVQNQAIFPGAGYIATGLEAVRELLGNEPLLLVNMQDIFIGQALIIPEPGSVETLVSVTNIVRGADKITARFTFFADEGRADSVSMAEKASANLIISLGEPDPDALPPRPEPGRDYHMLDVPAERFYDAVGSLGFGYTGPFRALSGLSRKMDYATGSVVQPEPTEGFGRLLVHPAALDAAVQSIILAYCFPGDTRLRTTHLPTRIDSLRVNIPLCEADRSAQTPFRSSVPSGGGVELSDINGDVDLYDENGSTLIQLQGLHTKPLVPPTPSTDLPLFTEWVWGPLSPHGRDLTLRGAEAEAERDLFNDLERVAYFYLRRLDAAIPPEQRVDLPAHQTALFRIDLELMHAVGENLASVIRGEMNMLEPMMQDNKLNRFYIEALGMSRYLEELSRMAAQISHRYPQMHVLEVGAGTGGATKVLLRHLEGGFESYAYTDISSGFFPSARETFEAYTDKMTFKTLDIEKDIAEQGYQEESFDLVIANLVVHATKDLQVTVRNLRRLVKPGGYLLLLEITDNDPLRFGFIFGGLPGWWLGEEEDRGLSPCVEVATWDRILRNTGFSGADEVTVRDPNNPLSVILTQALDDRVELLRQPLTAQPSSEGVQLDSLTILGAETGRAAELARDVEALLSPYFRRSRTVSSLVGLGPQDLPLMGTVLSLVELDTPVFKGITPERLRGFQQVFQQSKNVLWVTTGYKADDPYSAMVYGVGRNVVLEMSHLRLQFLDLETLAAADPRILAECVLRFEFSDMWEQAADKRPLLWTTEPDLAYEEGRLRMPRIKVSKERNARYNSSRRPVTKEVDPIASPLALQPLDDTGKDYALVAPSGRLAAGTRLDTVKIRVAKSILRAVRVLATNYLFVVAGFAENGTSPLVAVSDSQASVVEVDRAWTMPIQHSEGAADTAVETAMEQAMVALYDGLLAQALLQDVEHGRALAVLDASPSLTRALRSSGRYRGVQVVSLASKAAASGVPGTIPVHPRESVRSLKSKLPAHVDKLANFSDRADLARTVASCLPTRCDFQDWQSLTRPGAVITERTLLGLADCEVPSVLRAAWAHVKVDQRSTDLAGVLRADPTSLSQAAVVPGDAANQVCLVDWARRPTLPARIQPLVTTITFSPDKTYWLVGLTGGLGQSLCRWMVERGARYLVLTSRNPKLDPRWLAGVEALGAVVRAFPNDITSRDAVQAAYRTITATMPPIGGVAHGAMVLHDSMFAEVTVEKMDKVLRPKVDGAIHLDEIFYDAPLDWFVYLSSVVVITGNKGQGIYAAANMFLNSMTMQRRKRGVPAAAVNIGAVLGNGYVTRELNHQQQTFLQEVGNNWLSEQDFLTIFAEGVAASRVDSTEAVEITTGLRMLSSRDENVTWATNPKFQYLVQAHVASAAAKLAKSSNVSLKKQLEDVKTIQDASEILEDAYTSKLRAVLQIAPDRDVLSAALDDLGMDSLVAVEIRSWVLKELSADITVLEVLNSGTAGALFELVKERALASLALLDSGEQPDQVKSPRAAPLDLVSGHGGGDRRPSTVVDVADTSLDQGSSWDSGSLREASNGHDSTILSSTAPSSPISKPAGVDASDLEQTPIPEDSEEPVASSPDAGLARSVPLSFSQARFWFLRHFLPDQSAFNITSVVRMHGRPDMERLARAIKAVGNHHEALRTAFRVGEGNEPVQAVLKETVLVLEHRDISDADDVTPAYEAVQRHVYDLEAGETMRLQVLTLSPTEHFLILGYHHINMDGISFEVLFNDLQKAYRGVEFTPGVAQYPAFSILERDEYRLGKWKTELDFWKAEFAHLPEPLPLLPLSQRASRPAVAQYATLRVERRIPADLSATIKSAARKFGAGVFAFYLAVLKALVVRYVDVDNLCIGLADANRRRAEVLESIGLYLNLVPLNVPCDRTQPFSDALREMHTKYQRAFANARVPFDVLLHELDVPRSSSHPPLFQVFMNYRQGVSEAREFCDCECEGELVSGGQLAYDIAVDVVENPGGETNVMLSVQQSLYNAASAEVLLDSFFSLMEGFAANPISRISKPPLHRQTAIEQAVELANGPILDLAWAPTVSHRIDEMIQAHPDKLALTDGQGTDLTYAQLGASVNGIVQGLREVRASNVVGVLQHPTPAAICSILAVLKAGLTYVPLDPRVGPAKLAAIVGEAKPSCILVDDATEVDIGSFSLDDTAKVRNVASLPPSEDRLPIEAVPAGTAVLHCAAASRRPVSELAVQEGSETILQQTAFSFDISLFQSLLALTTASTLVVAPREVRGDPAALAKLMLIAGVTVTAATPTEYVHLIGHGASQLKQNDKWRLALCGGEKLSDQVVSGFRSLNRPELTLVNDYGPAEATFRCSTTVVPYQEEDGQELARTTPLKTCANSAVYILGDDMKPLPVGLTGEVCVGGAGVGLGYLNNHQLSAQRFIANPYASPAFVARGWTTMHPTGDRGRLSPDGGLILEGRIDGDTQVKLGGIRIELEEVERAVINDSQGAIREAAVSVRTDEASGTEYLVAHAVMQDRADSTPAHVDWLQQLQSRLSLPRYMAPSAIVPVAALPLSVSGKLDRRALRELPVATALTTQTPAEESEGLPAMQHLIKQLWEQVIPNGLLAGRDIGPKTDFFNVGGSSLLLVQLQALLREQFSVAPLVQELFQASTLETMAALVASGSGSSTQQGSDTTPAPIDWEAEAGLLQDAYYNSTTEKKQSGPAVANPPKVVVLTGSTGFLGRHLLERLLRTSHIEKVYCVAVRKQPAELPGIFNDPRVEVFPGDLSLAGLGLSDADTERVFSTADAVLHNGADVSFMKTYISLRPTNVAATQQLAALAQRQGRRIPFHFVSSAAVTQLTPLDEVGEVSVAAYPPAVSSPSSSSSAGGYVAAKWVSERHLEQVAQAHGLPVTIHRPSSILGNDASDVDLMGNLFRYVERLQAVPESRDWKGYFDLISVHTVAAAIVKAVVAAREEEQEEEEGHEKGGPAGRVRYQYEAGEIVYPLSTVADMGELEAAGFVLKTLPLEEWVAQAEGAGLNPLLAAYLKAAAGGGVRWAFPKLVSSTV.

Over residues 1 to 21 (MSDNDDEWNGFSDDNGEDDGP) the composition is skewed to acidic residues. Disordered regions lie at residues 1 to 38 (MSDN…WDVP) and 136 to 165 (DGWR…HTQH). Residues 136–148 (DGWRFHSHPDPQH) show a composition bias toward basic and acidic residues. The interval 172 to 520 (SLDTIAELSN…VQQNVEEMAK (349 aa)) is N-terminal acylcarrier protein transacylase domain (SAT). The interval 625–836 (PLPSVEDNVA…AGAPGARVTR (212 aa)) is disordered. Over residues 674–688 (TQGSQGSQGRRTPGS) the composition is skewed to low complexity. The span at 724–737 (PKRRGRPPGSKNKK) shows a compositional bias: basic residues. A Ketosynthase family 3 (KS3) domain is found at 737–1138 (KKDQAPAPAE…GANAHAILEA (402 aa)). A compositionally biased stretch (low complexity) spans 764–777 (ASAPRRGLRAAPAA). Positions 802-816 (ATASTPRAQSDQGTG) are enriched in polar residues. Catalysis depends on for beta-ketoacyl synthase activity residues Cys-873, His-1012, and His-1058. The segment at 1250–1573 (VFTGQGAQWP…VGTLLRQRDA (324 aa)) is malonyl-CoA:ACP transacylase (MAT) domain. Residues 1644 to 1777 (NELLGTRIMD…ANLIISLGEP (134 aa)) form an N-terminal hotdog fold region. The region spanning 1644 to 1947 (NELLGTRIMD…TKPLVPPTPS (304 aa)) is the PKS/mFAS DH domain. The segment at 1645–1941 (ELLGTRIMDN…QLQGLHTKPL (297 aa)) is dehydratase (DH) domain. His-1676 acts as the Proton acceptor; for dehydratase activity in catalysis. The tract at residues 1794-1947 (MLDVPAERFY…TKPLVPPTPS (154 aa)) is C-terminal hotdog fold. Asp-1854 functions as the Proton donor; for dehydratase activity in the catalytic mechanism. The segment at 2050-2241 (LNRFYIEALG…RNTGFSGADE (192 aa)) is methyltransferase (MT) domain. The interval 2794–2967 (TYWLVGLTGG…PAAAVNIGAV (174 aa)) is ketoreductase (KR) domain. In terms of domain architecture, Carrier 1 spans 3076 to 3153 (DASEILEDAY…ALFELVKERA (78 aa)). O-(pantetheine 4'-phosphoryl)serine is present on Ser-3113. Residues 3164 to 3265 (EQPDQVKSPR…PVASSPDAGL (102 aa)) are disordered. Polar residues-rich tracts occupy residues 3200–3209 (SLDQGSSWDS) and 3218–3233 (GHDS…SSPI). The condensation (C) domain stretch occupies residues 3268-3696 (SVPLSFSQAR…PISRISKPPL (429 aa)). The tract at residues 3730–4113 (IQAHPDKLAL…GGLILEGRID (384 aa)) is adenylation (A) domain. In terms of domain architecture, Carrier 2 spans 4236–4316 (EGLPAMQHLI…TMAALVASGS (81 aa)). Residues 4241–4313 (MQHLIKQLWE…TLETMAALVA (73 aa)) form a thiolation and peptide carrier (T) domain region. Residue Ser-4276 is modified to O-(pantetheine 4'-phosphoryl)serine. Residues 4367-4598 (LTGSTGFLGR…ISVHTVAAAI (232 aa)) are reductase (R) domain.

It in the C-terminal section; belongs to the NRP synthetase family.

The protein operates within secondary metabolite biosynthesis. PKS-NRPS hybrid synthetase; part of the gene cluster that mediates the biosynthesis of chaetoglobosin A which has a unique inhibitory activity against actin polymerization in mammalian cells. Chaetoglobosin A and its intermediates are involved in the morphological differentiation of C.globosum. The first step of the pathway is the synthesis of prochaetoglobosin I via condensation of one acetyl-CoA, 8 malonyl-CoA, and a L-tryptophan molecule by the PKS-NRPS hybrid synthetase cheA, followed by reduction of backbone double bond to install desired geometry by the enoyl reductase cheB. Further multiple oxidation steps performed by the cytochrome P450 monooxygenases cheE and cheG, as well as by the FAD-linked oxidoreductase cheF, lead to the formation of chaetoglobosin A. Depending on the order of action of these reductases, distinct intermediates can be identified. Within the pathway, the cytochrome P450 monooxygenase cheE catalyzes a stereospecific epoxidation on prochaetoglobosin I, cytoglobosin D, and chaetoglobosin J intermediates. The FAD-linked oxidoreductase cheF performs dehydrogenation of the C-20 hydroxyl groups in the 20-dihyrochaetoglobosin A and cytoglobosin D intermediates. Finally, the cytochrome P450 monooxygenase cheG can catalyze the stereospecific dihydroxylation of prochaetoglobosin I and prochaetoglobosin IV at C-19 and C-20, respectively. The Diels-Alderase cheD may play a role in the post-PKS-NRPS biosynthetic steps catalyzing Diels-Alder cyclization. The protein is PKS-NRPS hybrid synthetase cheA of Chaetomium globosum (strain ATCC 6205 / CBS 148.51 / DSM 1962 / NBRC 6347 / NRRL 1970) (Soil fungus).